Here is a 262-residue protein sequence, read N- to C-terminus: Acyl-[acyl-carrier-protein]--UDP-N-acetylglucosamine O-acyltransferase (262 aa).

This sequence belongs to the transferase hexapeptide repeat family. LpxA subfamily. Homotrimer.

It is found in the cytoplasm. The enzyme catalyses a (3R)-hydroxyacyl-[ACP] + UDP-N-acetyl-alpha-D-glucosamine = a UDP-3-O-[(3R)-3-hydroxyacyl]-N-acetyl-alpha-D-glucosamine + holo-[ACP]. Its pathway is glycolipid biosynthesis; lipid IV(A) biosynthesis; lipid IV(A) from (3R)-3-hydroxytetradecanoyl-[acyl-carrier-protein] and UDP-N-acetyl-alpha-D-glucosamine: step 1/6. Functionally, involved in the biosynthesis of lipid A, a phosphorylated glycolipid that anchors the lipopolysaccharide to the outer membrane of the cell. In Burkholderia vietnamiensis (strain G4 / LMG 22486) (Burkholderia cepacia (strain R1808)), this protein is Acyl-[acyl-carrier-protein]--UDP-N-acetylglucosamine O-acyltransferase.